A 320-amino-acid polypeptide reads, in one-letter code: Bifunctional ligase/repressor BirA (320 aa).

Residues 22–41 (GEQLGERLGMSRAAINKHIQ) constitute a DNA-binding region (H-T-H motif). In terms of domain architecture, BPL/LPL catalytic spans 66-254 (LLDADRIHSQ…KLRAALELFE (189 aa)). Residues 89–91 (STN), Gln112, 116–118 (RGR), and Lys183 contribute to the biotin site.

This sequence belongs to the biotin--protein ligase family.

It catalyses the reaction biotin + L-lysyl-[protein] + ATP = N(6)-biotinyl-L-lysyl-[protein] + AMP + diphosphate + H(+). Functionally, acts both as a biotin--[acetyl-CoA-carboxylase] ligase and a biotin-operon repressor. In the presence of ATP, BirA activates biotin to form the BirA-biotinyl-5'-adenylate (BirA-bio-5'-AMP or holoBirA) complex. HoloBirA can either transfer the biotinyl moiety to the biotin carboxyl carrier protein (BCCP) subunit of acetyl-CoA carboxylase, or bind to the biotin operator site and inhibit transcription of the operon. The chain is Bifunctional ligase/repressor BirA from Salmonella typhimurium (strain LT2 / SGSC1412 / ATCC 700720).